The following is a 268-amino-acid chain: 4-hydroxy-tetrahydrodipicolinate reductase (268 aa).

Residues 10-15 (GSTGRM), Glu36, 99-101 (GTT), and 123-126 (APNM) contribute to the NAD(+) site. The Proton donor/acceptor role is filled by His156. His157 is a binding site for (S)-2,3,4,5-tetrahydrodipicolinate. The Proton donor role is filled by Lys160. (S)-2,3,4,5-tetrahydrodipicolinate is bound at residue 166–167 (GT).

The protein belongs to the DapB family.

Its subcellular location is the cytoplasm. The enzyme catalyses (S)-2,3,4,5-tetrahydrodipicolinate + NAD(+) + H2O = (2S,4S)-4-hydroxy-2,3,4,5-tetrahydrodipicolinate + NADH + H(+). It carries out the reaction (S)-2,3,4,5-tetrahydrodipicolinate + NADP(+) + H2O = (2S,4S)-4-hydroxy-2,3,4,5-tetrahydrodipicolinate + NADPH + H(+). Its pathway is amino-acid biosynthesis; L-lysine biosynthesis via DAP pathway; (S)-tetrahydrodipicolinate from L-aspartate: step 4/4. Its function is as follows. Catalyzes the conversion of 4-hydroxy-tetrahydrodipicolinate (HTPA) to tetrahydrodipicolinate. This is 4-hydroxy-tetrahydrodipicolinate reductase from Nitrosomonas europaea (strain ATCC 19718 / CIP 103999 / KCTC 2705 / NBRC 14298).